We begin with the raw amino-acid sequence, 338 residues long: tRNA pseudouridine synthase D (338 aa).

The active-site Nucleophile is the aspartate 79. The TRUD domain maps to 154–303 (GVPNYFGEQR…EEAWRANILY (150 aa)).

The protein belongs to the pseudouridine synthase TruD family.

The catalysed reaction is uridine(13) in tRNA = pseudouridine(13) in tRNA. Responsible for synthesis of pseudouridine from uracil-13 in transfer RNAs. This Legionella pneumophila (strain Corby) protein is tRNA pseudouridine synthase D.